A 341-amino-acid chain; its full sequence is Uroporphyrinogen decarboxylase (341 aa).

Substrate contacts are provided by residues 25 to 29 (RQAGR), Phe44, Asp74, Tyr151, Ser206, and His318.

Belongs to the uroporphyrinogen decarboxylase family. Homodimer.

The protein localises to the cytoplasm. It carries out the reaction uroporphyrinogen III + 4 H(+) = coproporphyrinogen III + 4 CO2. Its pathway is porphyrin-containing compound metabolism; protoporphyrin-IX biosynthesis; coproporphyrinogen-III from 5-aminolevulinate: step 4/4. Catalyzes the decarboxylation of four acetate groups of uroporphyrinogen-III to yield coproporphyrinogen-III. The protein is Uroporphyrinogen decarboxylase of Flavobacterium johnsoniae (strain ATCC 17061 / DSM 2064 / JCM 8514 / BCRC 14874 / CCUG 350202 / NBRC 14942 / NCIMB 11054 / UW101) (Cytophaga johnsonae).